Reading from the N-terminus, the 82-residue chain is MEVKTLANIKSAIKRAELNVKANEKNSAQKSAMRTAIKAFEANPSEELFRAASSSIDKAESKGLIHKNKASRDKARLAAKLG.

Belongs to the bacterial ribosomal protein bS20 family.

Functionally, binds directly to 16S ribosomal RNA. In Streptococcus pyogenes serotype M12 (strain MGAS2096), this protein is Small ribosomal subunit protein bS20.